We begin with the raw amino-acid sequence, 236 residues long: Biosynthetic peptidoglycan transglycosylase (236 aa).

Residues 12-31 traverse the membrane as a helical segment; it reads ALLWFAAGSVLVVLVLRWVP.

This sequence belongs to the glycosyltransferase 51 family.

Its subcellular location is the cell inner membrane. The enzyme catalyses [GlcNAc-(1-&gt;4)-Mur2Ac(oyl-L-Ala-gamma-D-Glu-L-Lys-D-Ala-D-Ala)](n)-di-trans,octa-cis-undecaprenyl diphosphate + beta-D-GlcNAc-(1-&gt;4)-Mur2Ac(oyl-L-Ala-gamma-D-Glu-L-Lys-D-Ala-D-Ala)-di-trans,octa-cis-undecaprenyl diphosphate = [GlcNAc-(1-&gt;4)-Mur2Ac(oyl-L-Ala-gamma-D-Glu-L-Lys-D-Ala-D-Ala)](n+1)-di-trans,octa-cis-undecaprenyl diphosphate + di-trans,octa-cis-undecaprenyl diphosphate + H(+). Its pathway is cell wall biogenesis; peptidoglycan biosynthesis. Functionally, peptidoglycan polymerase that catalyzes glycan chain elongation from lipid-linked precursors. The sequence is that of Biosynthetic peptidoglycan transglycosylase from Pseudomonas syringae pv. syringae (strain B728a).